The sequence spans 483 residues: Regulatory protein ViaA (483 aa).

It belongs to the ViaA family. Homodimer. Interacts with RavA.

Its subcellular location is the cytoplasm. Its function is as follows. Component of the RavA-ViaA chaperone complex, which may act on the membrane to optimize the function of some of the respiratory chains. ViaA stimulates the ATPase activity of RavA. This Salmonella schwarzengrund (strain CVM19633) protein is Regulatory protein ViaA.